The chain runs to 321 residues: Aldose reductase C (321 aa).

NADP(+) is bound at residue 22 to 31 (GNQIPSIGLG). Tyrosine 62 serves as the catalytic Proton donor. Histidine 124 serves as a coordination point for substrate. 227–281 (SPLGQGKCDFFSNKILKSIAGKYKKSVANVIFKWLNQRGIAAIPKSGNHSRIIEN) lines the NADP(+) pocket.

It belongs to the aldo/keto reductase family.

It carries out the reaction an alditol + NAD(+) = an aldose + NADH + H(+). The catalysed reaction is an alditol + NADP(+) = an aldose + NADPH + H(+). In terms of biological role, catalyzes the NADPH-dependent reduction of a wide variety of carbonyl-containing compounds to their corresponding alcohols with a broad range of catalytic efficiencies. This is Aldose reductase C (alrC) from Dictyostelium discoideum (Social amoeba).